Consider the following 145-residue polypeptide: MVDELVLLLHALLMRHRALSIENSQLMEQLRLLVCERASLLRQVRPPSCPVPFPETFNGESSRLPEFIVQTASYMLVNENRFCNDAMKVAFLISLLTGEAEEWVVPYIEMDSPILGDYRAFLDEMKQCFGWDDDEDDDDEEEDDY.

This sequence belongs to the LDOC1 family. As to quaternary structure, interacts with NOD2.

It localises to the nucleus. Functionally, may have an important role in the development and/or progression of some cancers. This Gorilla gorilla gorilla (Western lowland gorilla) protein is Protein LDOC1 (LDOC1).